A 132-amino-acid polypeptide reads, in one-letter code: Large ribosomal subunit protein bL17 (132 aa).

It belongs to the bacterial ribosomal protein bL17 family. In terms of assembly, part of the 50S ribosomal subunit. Contacts protein L32.

This chain is Large ribosomal subunit protein bL17, found in Anaplasma phagocytophilum (strain HZ).